A 477-amino-acid chain; its full sequence is Alkaline phosphatase (477 aa).

D44 is a binding site for Mg(2+). D44 provides a ligand contact to Zn(2+). S94 functions as the Phosphoserine intermediate in the catalytic mechanism. N124 carries N-linked (GlcNAc...) asparagine glycosylation. Mg(2+)-binding residues include H155 and T157. C165 and C185 are oxidised to a cystine. N-linked (GlcNAc...) asparagine glycosylation occurs at N214. E315 contributes to the Mg(2+) binding site. Residues D320, H324, D361, and H362 each coordinate Zn(2+). The N-linked (GlcNAc...) asparagine glycan is linked to N413. A Zn(2+)-binding site is contributed by H437.

As to quaternary structure, homodimer. Mg(2+) serves as cofactor. It depends on Zn(2+) as a cofactor.

The protein localises to the cell membrane. It carries out the reaction a phosphate monoester + H2O = an alcohol + phosphate. In Gadus morhua (Atlantic cod), this protein is Alkaline phosphatase.